Consider the following 88-residue polypeptide: HssA/B-like protein 11 (88 aa).

Belongs to the hssA/B family.

The sequence is that of HssA/B-like protein 11 (hssl11) from Dictyostelium discoideum (Social amoeba).